The chain runs to 542 residues: uncharacterized protein (542 aa).

Helical transmembrane passes span 4 to 23, 28 to 47, 51 to 70, 91 to 113, and 160 to 182; these read FVENQLLALVAIMGIGLLLG, FGFRLGVAAVLFVGLAFSTI, ITVPPLIYVVGLALFVYTIG, LALGAIIATTAIAWVVIKALGLA, and YSLTYPLGVLVVILTIAVCGGLF. RCK C-terminal domains lie at 190–272 and 274–355; these read AKNA…LLGE and VDGH…IFGD. The next 5 helical transmembrane spans lie at 363 to 385, 390 to 412, 425 to 447, 457 to 479, and 519 to 541; these read FNLVPLVVGLSLGVLVGMMEFPL, ALSLGNAGGPLLIALLLGAMGRT, LALRQLGITMFLAAIGTTAGAGF, LLIIGVGALLTLVISVLVLVIGH, and YTSVYPLAMVAKIIAAQVLLFLL.

This sequence belongs to the AAE transporter (TC 2.A.81) family.

Its subcellular location is the cell membrane. This is an uncharacterized protein from Corynebacterium efficiens (strain DSM 44549 / YS-314 / AJ 12310 / JCM 11189 / NBRC 100395).